Reading from the N-terminus, the 807-residue chain is Glycerol-3-phosphate acyltransferase (807 aa).

The HXXXXD motif signature appears at 305–310; it reads CHRSHM.

This sequence belongs to the GPAT/DAPAT family.

The protein resides in the cell inner membrane. It carries out the reaction sn-glycerol 3-phosphate + an acyl-CoA = a 1-acyl-sn-glycero-3-phosphate + CoA. Its pathway is phospholipid metabolism; CDP-diacylglycerol biosynthesis; CDP-diacylglycerol from sn-glycerol 3-phosphate: step 1/3. The polypeptide is Glycerol-3-phosphate acyltransferase (Klebsiella pneumoniae subsp. pneumoniae (strain ATCC 700721 / MGH 78578)).